Consider the following 199-residue polypeptide: MKIVLASNNPGKLAELQTMLAPLGVELQRQADLGVGQAAEPFRTFVENALAKARFAAAHTGLPALADDAGLCVDAFGGLPGVDTADYATRFGHARGEANNVRALLEQMQGIDERRAALVSTLVAVRSPDDPEPLIAVGRVVGQITRAPRGSNGFGFDPVLLLPGLGKTFAELPAEVKNAHSHRGRAAQQMLALLRERWL.

7–12 (SNNPGK) is a substrate binding site. The active-site Proton acceptor is Asp-68. Mg(2+) is bound at residue Asp-68. Residues Ala-69, 154–157 (FGFD), Lys-177, and 182–183 (HR) contribute to the substrate site.

This sequence belongs to the HAM1 NTPase family. As to quaternary structure, homodimer. The cofactor is Mg(2+).

The enzyme catalyses XTP + H2O = XMP + diphosphate + H(+). The catalysed reaction is dITP + H2O = dIMP + diphosphate + H(+). It carries out the reaction ITP + H2O = IMP + diphosphate + H(+). Pyrophosphatase that catalyzes the hydrolysis of nucleoside triphosphates to their monophosphate derivatives, with a high preference for the non-canonical purine nucleotides XTP (xanthosine triphosphate), dITP (deoxyinosine triphosphate) and ITP. Seems to function as a house-cleaning enzyme that removes non-canonical purine nucleotides from the nucleotide pool, thus preventing their incorporation into DNA/RNA and avoiding chromosomal lesions. The sequence is that of dITP/XTP pyrophosphatase from Verminephrobacter eiseniae (strain EF01-2).